A 595-amino-acid polypeptide reads, in one-letter code: Estrogen receptor (595 aa).

The interval 1–184 (MTMTLHTKAS…AMESVKETRY (184 aa)) is modulating(transactivation AF-1); mediates interaction with MACROD1. The O-linked (GlcNAc) serine glycan is linked to Ser10. A required for interaction with NCOA1 region spans residues 35–47 (LERALSEVYVDSS). Residues 35-174 (LERALSEVYV…LSSSSEKGSM (140 aa)) form an interaction with DDX5; self-association region. Phosphoserine; by CDK2 is present on residues Ser103 and Ser105. At Ser118 the chain carries Phosphoserine. The interval 143-174 (DSGPPAFYRSNSDNRRQSGRERLSSSSEKGSM) is disordered. Positions 154–165 (SDNRRQSGRERL) are enriched in basic and acidic residues. Residue Ser167 is modified to Phosphoserine; by CK2. 2 consecutive NR C4-type zinc fingers follow at residues 185–205 (CAVCNDYASGYHYGVWSCEGC) and 221–245 (CPATNQCTIDKNRRKSCQACRLRKC). Residues 185-250 (CAVCNDYASG…RLRKCYEVGM (66 aa)) constitute a DNA-binding region (nuclear receptor). A mediates interaction with DNTTIP2 region spans residues 185 to 310 (CAVCNDYASG…TKKNSPALSL (126 aa)). Residues 251-310 (MKGGIRKDRRGGRMLKHKRQRDDLEGRNDMGPSGDMRATNLWPSPLVIKHTKKNSPALSL) form a hinge region. Arg260 bears the Asymmetric dimethylarginine; by PRMT1 mark. Basic residues predominate over residues 260–269 (RGGRMLKHKR). The segment at 260-285 (RGGRMLKHKRQRDDLEGRNDMGPSGD) is disordered. The interval 262–595 (GRMLKHKRQR…SEAESFPNTI (334 aa)) is interaction with AKAP13. The segment at 264–595 (MLKHKRQRDD…SEAESFPNTI (332 aa)) is self-association. Residues 311 to 547 (TADQMVSALL…DLLLEMLDAH (237 aa)) enclose the NR LBD domain. Residues 311-595 (TADQMVSALL…SEAESFPNTI (285 aa)) are transactivation AF-2. Residues Glu353 and Arg394 each coordinate 17beta-estradiol. Cys447 carries S-palmitoyl cysteine lipidation. Residue His524 participates in 17beta-estradiol binding. Tyr537 bears the Phosphotyrosine; by Tyr-kinases mark. The tract at residues 554 to 578 (SRMGVSPEEPSQSQLTTTNSTSSHS) is disordered. The segment covering 564-578 (SQSQLTTTNSTSSHS) has biased composition (low complexity). Thr571 carries an O-linked (GlcNAc) threonine glycan.

The protein belongs to the nuclear hormone receptor family. NR3 subfamily. Binds DNA as a homodimer. Can form a heterodimer with ESR2. Interacts with coactivator NCOA5. Interacts with PELP1, the interaction is enhanced by 17-beta-estradiol; the interaction increases ESR1 transcriptional activity. Interacts with NCOA7; the interaction is ligand-inducible. Interacts with AKAP13, CUEDC2, HEXIM1, KDM5A, MAP1S, SMARD1, and UBE1C. Interacts with MUC1; the interaction is stimulated by 7 beta-estradiol (E2) and enhances ESR1-mediated transcription. Interacts with DNTTIP2, and UIMC1. Interacts with KMT2D/MLL2. Interacts with ATAD2; the interaction is enhanced by estradiol. Interacts with KIF18A and LDB1. Interacts with RLIM (via its C-terminus). Interacts with MACROD1. Interacts with SH2D4A and PLCG. Interacts with SH2D4A; the interaction blocks binding to PLCG and inhibits estrogen-induced cell proliferation. Interacts with DYNLL1. Interacts with CCDC62; the interaction requires estradiol and appears to enhance the transcription of target genes. Interacts with NR2C1; the interaction prevents homodimerization of ESR1 and suppresses its transcriptional activity and cell growth. Interacts with DNAAF4. Interacts with PRMT2. Interacts with RBFOX2. Interacts with EP300; the interaction is estrogen-dependent and enhanced by CITED1. Interacts with CITED1; the interaction is estrogen-dependent. Interacts with FAM120B, FOXL2, PHB2 and SLC30A9. Interacts with coactivators NCOA3 and NCOA6. Interacts with STK3/MST2 only in the presence of SAV1 and vice-versa. Binds to CSNK1D. Interacts with NCOA2; NCOA2 can interact with ESR1 AF-1 and AF-2 domains simultaneously and mediate their transcriptional synergy. Interacts with DDX5. Interacts with NCOA1; the interaction seems to require a self-association of N-terminal and C-terminal regions. Interacts with ZNF366, DDX17, NFKB1, RELA, SP1 and SP3. Interacts with NRIP1. Interacts with GPER1; the interaction occurs in an estrogen-dependent manner. Interacts with CLOCK and the interaction is stimulated by estrogen. Interacts with TRIP4 (ufmylated); estrogen dependent. Interacts with LMTK3; the interaction phosphorylates ESR1 (in vitro) and protects it against proteasomal degradation. Interacts with CCAR2 (via N-terminus) in a ligand-independent manner. Interacts with ZFHX3. Interacts with SFR1 in a ligand-dependent and -independent manner. Interacts with DCAF13, LATS1 and DCAF1; regulates ESR1 ubiquitination and ubiquitin-mediated proteasomal degradation. Interacts (via DNA-binding domain) with POU4F2 (C-terminus); this interaction increases the estrogen receptor ESR1 transcriptional activity in a DNA- and ligand 17-beta-estradiol-independent manner. Interacts with ESRRB isoform 1. Interacts with UBE3A and WBP2. Interacts with GTF2B. Interacts with RBM39. In the absence of hormonal ligand, interacts with TACC1. Interacts with PI3KR1 or PI3KR2 and PTK2/FAK1. Interacts with SRC. Interacts with BAG1; the interaction is promoted in the absence of estradiol (17-beta-estradiol/E2). Interacts with and ubiquitinated by STUB1; the interaction is promoted in the absence of estradiol (17-beta-estradiol/E2). Interacts with NEDD8. Ubiquitinated; regulated by LATS1 via DCAF1 it leads to ESR1 proteasomal degradation. Deubiquitinated by OTUB1. Ubiquitinated by STUB1/CHIP; in the CA1 hippocampal region following loss of endogenous circulating estradiol (17-beta-estradiol/E2). Ubiquitinated by UBR5, leading to its degradation: UBR5 specifically recognizes and binds ligand-bound ESR1 when it is not associated with coactivators (NCOAs). In presence of NCOAs, the UBR5-degron is not accessible, preventing its ubiquitination and degradation. Post-translationally, phosphorylated by cyclin A/CDK2 and CK1. Phosphorylation probably enhances transcriptional activity. Dephosphorylation at Ser-118 by PPP5C inhibits its transactivation activity. Phosphorylated by LMTK3 (in vitro). In terms of processing, palmitoylated at Cys-447 by ZDHHC7 and ZDHHC21. Palmitoylation is required for plasma membrane targeting and for rapid intracellular signaling via ERK and AKT kinases and cAMP generation, but not for signaling mediated by the nuclear hormone receptor. Dimethylated by PRMT1 at Arg-260. The methylation may favor cytoplasmic localization. Demethylated by JMJD6 at Arg-260.

The protein resides in the nucleus. It is found in the cytoplasm. The protein localises to the golgi apparatus. Its subcellular location is the cell membrane. In terms of biological role, nuclear hormone receptor. The steroid hormones and their receptors are involved in the regulation of eukaryotic gene expression and affect cellular proliferation and differentiation in target tissues. Ligand-dependent nuclear transactivation involves either direct homodimer binding to a palindromic estrogen response element (ERE) sequence or association with other DNA-binding transcription factors, such as AP-1/c-Jun, c-Fos, ATF-2, Sp1 and Sp3, to mediate ERE-independent signaling. Ligand binding induces a conformational change allowing subsequent or combinatorial association with multiprotein coactivator complexes through LXXLL motifs of their respective components. Mutual transrepression occurs between the estrogen receptor (ER) and NF-kappa-B in a cell-type specific manner. Decreases NF-kappa-B DNA-binding activity and inhibits NF-kappa-B-mediated transcription from the IL6 promoter and displace RELA/p65 and associated coregulators from the promoter. Recruited to the NF-kappa-B response element of the CCL2 and IL8 promoters and can displace CREBBP. Present with NF-kappa-B components RELA/p65 and NFKB1/p50 on ERE sequences. Can also act synergistically with NF-kappa-B to activate transcription involving respective recruitment adjacent response elements; the function involves CREBBP. Can activate the transcriptional activity of TFF1. Also mediates membrane-initiated estrogen signaling involving various kinase cascades. Essential for MTA1-mediated transcriptional regulation of BRCA1 and BCAS3. Maintains neuronal survival in response to ischemic reperfusion injury when in the presence of circulating estradiol (17-beta-estradiol/E2). The polypeptide is Estrogen receptor (ESR1) (Mesocricetus auratus (Golden hamster)).